The chain runs to 372 residues: MTDALKRLSDEGVAIWLDDLSRKRITSGNLAELIDQQHVVGVTTNPSIFQKAISQGDGYDQQLADLAVRGVTVEEAIRMITTADVRDAADILRPVYDNTGGKDGRVSIEVDPRLAHNTHATVAEAKQLAWLVDRPNTFIKIPATEAGLPAIAETIGLGISVNVTLIFSLERYRKVMDAFLTGLEKAKERGLDLSQIHSVASFFVSRVDTEIDKRIDALGTDEAKAQRGKAAVANARLAYQAYEEVFGTDRWAALEKAGANKQRPLWASTGVKDKAYSDTMYVTDLVAPNTVNTMPEATLLATEDHGEITGDAVAGSYERARADLDAIEKLGISYDEVVQLLEKEGVDKFEDAWNDLLKSTEAELKRLAPSKG.

Catalysis depends on Lys140, which acts as the Schiff-base intermediate with substrate.

It belongs to the transaldolase family. Type 2 subfamily.

The protein resides in the cytoplasm. It carries out the reaction D-sedoheptulose 7-phosphate + D-glyceraldehyde 3-phosphate = D-erythrose 4-phosphate + beta-D-fructose 6-phosphate. It functions in the pathway carbohydrate degradation; pentose phosphate pathway; D-glyceraldehyde 3-phosphate and beta-D-fructose 6-phosphate from D-ribose 5-phosphate and D-xylulose 5-phosphate (non-oxidative stage): step 2/3. Functionally, transaldolase is important for the balance of metabolites in the pentose-phosphate pathway. The sequence is that of Transaldolase 2 from Streptomyces coelicolor (strain ATCC BAA-471 / A3(2) / M145).